We begin with the raw amino-acid sequence, 476 residues long: H2.0-like homeobox protein (476 aa).

Disordered stretches follow at residues 121-170, 328-401, and 413-476; these read HLPQ…SSKD, WRHS…HQTT, and TASS…LAGL. Residues 158–168 show a composition bias toward low complexity; it reads HHSGSAPAPSS. Positions 273–332 form a DNA-binding region, homeobox; sequence RSWSRAVFSNLQRKGLEKRFEIQKYVTKPDRKQLAAMLGLTDAQVKVWFQNRRMKWRHSK. Basic and acidic residues-rich tracts occupy residues 331-346 and 355-368; these read SKEA…EAGE and EGER…RSEG. Acidic residues predominate over residues 369–379; sequence EAESESSDSES. Residues 386–397 show a composition bias toward basic and acidic residues; sequence DTERTEGTERSL. Positions 413–446 are enriched in low complexity; that stretch reads TASSSASGSSFSFSSSSSLGSSNGSAGSASSLGS. Polar residues predominate over residues 455 to 464; it reads HQPSVTSGPQ.

The protein belongs to the H2.0 homeobox family.

It is found in the nucleus. Its function is as follows. Transcription factor required for TBX21/T-bet-dependent maturation of Th1 cells as well as maintenance of Th1-specific gene expression. Involved in embryogenesis and hematopoiesis. In Rattus norvegicus (Rat), this protein is H2.0-like homeobox protein (Hlx).